Consider the following 247-residue polypeptide: 5-oxoprolinase subunit A 1 (247 aa).

This sequence belongs to the LamB/PxpA family. As to quaternary structure, forms a complex composed of PxpA, PxpB and PxpC.

The catalysed reaction is 5-oxo-L-proline + ATP + 2 H2O = L-glutamate + ADP + phosphate + H(+). In terms of biological role, catalyzes the cleavage of 5-oxoproline to form L-glutamate coupled to the hydrolysis of ATP to ADP and inorganic phosphate. The sequence is that of 5-oxoprolinase subunit A 1 from Ralstonia nicotianae (strain ATCC BAA-1114 / GMI1000) (Ralstonia solanacearum).